The primary structure comprises 420 residues: Transcriptional adapter 2-beta (420 aa).

Residues 4–59 form a ZZ-type zinc finger; it reads LGKKYCVYCLAEVSPLRFRCTECQDIELCPECFSAGAEIGHHRRYHGYQLVDGGRF. Residues C9, C12, C23, C26, C32, C35, H45, and H49 each coordinate Zn(2+). The region spanning 65-118 is the SANT domain; the sequence is EAEGGWTSREEQLLLDAIEQFGFGNWEDMAAHVGASRTPQEVMEHYVSMYIHGN. The segment at 305–335 is disordered; that stretch reads SAEYEAARHKREKRKENKNLAGSKRGKEDGK.

Interacts with GCN5L2, SMARCA4, SMARCE1 and PAX5. Component of the TFTC-HAT complex.

The protein resides in the nucleus. In terms of biological role, coactivates PAX5-dependent transcription together with either SMARCA4 or GCN5L2. The protein is Transcriptional adapter 2-beta (TADA2B) of Homo sapiens (Human).